A 195-amino-acid chain; its full sequence is Imidazoleglycerol-phosphate dehydratase (195 aa).

It belongs to the imidazoleglycerol-phosphate dehydratase family.

Its subcellular location is the cytoplasm. It carries out the reaction D-erythro-1-(imidazol-4-yl)glycerol 3-phosphate = 3-(imidazol-4-yl)-2-oxopropyl phosphate + H2O. Its pathway is amino-acid biosynthesis; L-histidine biosynthesis; L-histidine from 5-phospho-alpha-D-ribose 1-diphosphate: step 6/9. The chain is Imidazoleglycerol-phosphate dehydratase from Beijerinckia indica subsp. indica (strain ATCC 9039 / DSM 1715 / NCIMB 8712).